The following is a 638-amino-acid chain: Epithelial sodium channel subunit beta (638 aa).

Over 1-50 the chain is Cytoplasmic; that stretch reads MPVKKYLLKCLHRLQKGPGYTYKELLVWYCNNTNTHGPKRIICEGPKKKA. The helical transmembrane segment at 51 to 71 threads the bilayer; sequence MWFLLTLLFACLVCWQWGVFI. Topologically, residues 72-530 are extracellular; the sequence is QTYLSWEVSV…GGQFGFWMGG (459 aa). 9 disulfides stabilise this stretch: Cys-98-Cys-270, Cys-182-Cys-187, Cys-194-Cys-201, Cys-247-Cys-254, Cys-359-Cys-446, Cys-384-Cys-442, Cys-388-Cys-438, Cys-397-Cys-424, and Cys-399-Cys-413. 2 N-linked (GlcNAc...) asparagine glycosylation sites follow: Asn-135 and Asn-141. Residues 531–551 traverse the membrane as a helical segment; the sequence is SVLCLIEFGEIIIDFIWITVI. Over 552–638 the chain is Cytoplasmic; that stretch reads KLVASCKGLR…MESDSEVEAI (87 aa). A disordered region spans residues 598–620; the sequence is NAEVYPDQQTLPIPGTPPPNYDS. The short motif at 614-618 is the PY motif; recruits WW domain-containing proteins and is thereby required for ubiquitination and inhibition of the channel by NEDD4 and NEDD4L element; the sequence is PPPNY. Residues Ser-631 and Ser-633 each carry the phosphoserine modification.

The protein belongs to the amiloride-sensitive sodium channel (TC 1.A.6) family. SCNN1B subfamily. In terms of assembly, component of the heterotrimeric epithelial sodium channel (ENaC) composed of an alpha/SCNN1A, a beta/SCNN1B and a gamma/SCNN1G subunit. Interacts with WWP1 (via WW domains). Interacts with WWP2 (via WW domains). Interacts with the full-length immature form of PCSK9 (pro-PCSK9). Interacts (N-glycosylated) with BPIFA1; the interaction is direct and inhibits the proteolytic processing of SCNN1A and SCNN1G and the activation of ENaC. Ubiquitinated. Can be ubiquitinated at multiple sites and undergo monoubiquitination and polyubiquitination. Ubiquitination by NEDD4 or NEDD4L inhibits the ENaC channel through endocytosis, intracellular retention and degradation of its individual subunits. However, some studies could not confirm the ubiquitination of this subunit of the ENaC. Post-translationally, N-glycosylated. N-glycosylation is required for interaction with BPIFA1. In terms of processing, phosphorylated on serine and threonine residues. Aldosterone and insulin increase the basal level of phosphorylation. In terms of tissue distribution, expressed in lung and epididymis. In the caput region of the epididymis, expressed at the luminal and basolateral surfaces of the ducts and in the smooth muscle coat. In the caudal region of the epididymis, expressed along the luminal border but not continuously, in the smooth muscle coat, in the interstitial muscle tissue and in sperm in the caudal lumen.

Its subcellular location is the apical cell membrane. The protein localises to the cytoplasmic vesicle membrane. The catalysed reaction is Na(+)(in) = Na(+)(out). Its activity is regulated as follows. Originally identified and characterized by its inhibition by the diuretic drug amiloride. Functionally, this is one of the three pore-forming subunits of the heterotrimeric epithelial sodium channel (ENaC), a critical regulator of sodium balance and fluid homeostasis. ENaC operates in epithelial tissues, where it mediates the electrodiffusion of sodium ions from extracellular fluid through the apical membrane of cells, with water following osmotically. It plays a key role in maintaining sodium homeostasis through electrogenic sodium reabsorption in the kidneys. This subunit is not essential for ENaC function in airway surface liquid homeostasis and proper mucus clearance. The sequence is that of Epithelial sodium channel subunit beta from Rattus norvegicus (Rat).